Reading from the N-terminus, the 677-residue chain is Methionine--tRNA ligase (677 aa).

Positions Pro-15–His-25 match the 'HIGH' region motif. Zn(2+) is bound by residues Cys-146, Cys-149, Cys-159, and Cys-162. The 'KMSKS' region motif lies at Lys-333 to Ser-337. ATP is bound at residue Lys-336. The tRNA-binding domain occupies Asp-575 to Lys-677.

It belongs to the class-I aminoacyl-tRNA synthetase family. MetG type 1 subfamily. As to quaternary structure, homodimer. Zn(2+) serves as cofactor.

It is found in the cytoplasm. It carries out the reaction tRNA(Met) + L-methionine + ATP = L-methionyl-tRNA(Met) + AMP + diphosphate. Is required not only for elongation of protein synthesis but also for the initiation of all mRNA translation through initiator tRNA(fMet) aminoacylation. This is Methionine--tRNA ligase from Shigella flexneri serotype 5b (strain 8401).